The primary structure comprises 731 residues: 1,4-alpha-glucan branching enzyme GlgB (731 aa).

Catalysis depends on Asp-408, which acts as the Nucleophile. Catalysis depends on Glu-461, which acts as the Proton donor.

It belongs to the glycosyl hydrolase 13 family. GlgB subfamily. Monomer.

It carries out the reaction Transfers a segment of a (1-&gt;4)-alpha-D-glucan chain to a primary hydroxy group in a similar glucan chain.. The protein operates within glycan biosynthesis; glycogen biosynthesis. Functionally, catalyzes the formation of the alpha-1,6-glucosidic linkages in glycogen by scission of a 1,4-alpha-linked oligosaccharide from growing alpha-1,4-glucan chains and the subsequent attachment of the oligosaccharide to the alpha-1,6 position. This chain is 1,4-alpha-glucan branching enzyme GlgB, found in Corynebacterium glutamicum (strain ATCC 13032 / DSM 20300 / JCM 1318 / BCRC 11384 / CCUG 27702 / LMG 3730 / NBRC 12168 / NCIMB 10025 / NRRL B-2784 / 534).